Reading from the N-terminus, the 851-residue chain is Alanine--tRNA ligase (851 aa).

Positions 535, 539, 637, and 641 each coordinate Zn(2+).

This sequence belongs to the class-II aminoacyl-tRNA synthetase family. The cofactor is Zn(2+).

The protein resides in the cytoplasm. The enzyme catalyses tRNA(Ala) + L-alanine + ATP = L-alanyl-tRNA(Ala) + AMP + diphosphate. Its function is as follows. Catalyzes the attachment of alanine to tRNA(Ala) in a two-step reaction: alanine is first activated by ATP to form Ala-AMP and then transferred to the acceptor end of tRNA(Ala). Also edits incorrectly charged Ser-tRNA(Ala) and Gly-tRNA(Ala) via its editing domain. In Acholeplasma laidlawii (strain PG-8A), this protein is Alanine--tRNA ligase.